Reading from the N-terminus, the 141-residue chain is Anthrone oxygenase ptaC (141 aa).

An N-terminal signal peptide occupies residues 1–19 (MMGLPLMAVPMLLDTGADP). 2 helical membrane-spanning segments follow: residues 33–53 (GVRT…WTII) and 64–84 (ILAV…YVLA).

Belongs to the anthrone oxygenase family.

Its subcellular location is the membrane. It functions in the pathway secondary metabolite biosynthesis. Its function is as follows. Anthrone oxygenase; part of the gene cluster that mediates the biosynthesis of pestheic acid, a diphenyl ether which is a biosynthetic precursor of the unique chloropupukeananes. The biosynthesis initiates from condensation of acetate and malonate units catalyzed by the non-reducing PKS ptaA. As the ptaA protein is TE/CLC domain-deficient, hydrolysis and Claisen cyclization of the polyketide could be catalyzed by ptaB containing a beta-lactamase domain. The ptaB protein might hydrolyze the thioester bond between the ACP of ptaA and the intermediate to release atrochrysone carboxylic acid, which is spontaneously dehydrated to form endocrocin anthrone. Endocrocin anthrone is then converted to endocrocin, catalyzed by the anthrone oxygenase ptaC. Spontaneous decarboxylation of endocrocin occurs to generate emodin. An O-methyltransferase (ptaH or ptaI) could methylate emodin to form physcion. PtaJ could then catalyze the oxidative cleavage of physcion, and rotation of the intermediate could then afford desmethylisosulochrin. PtaF, a putative NADH-dependent oxidoreductase, might also participate in the oxidative cleavage step. Desmethylisosulochrin is then transformed by another O-methyltransferase (ptaH or ptaI) to form isosulochrin. Chlorination of isosulochrin by ptaM in the cyclohexadienone B ring then produces chloroisosulochrin. PtaE is responsible for the oxidative coupling reactions of both benzophenones isosulochrin and chloroisosulochrin to RES-1214-1 and pestheic acid respectively, regardless of chlorination. The chain is Anthrone oxygenase ptaC from Pestalotiopsis fici (strain W106-1 / CGMCC3.15140).